The primary structure comprises 147 residues: MVHFTAEEKSTILSVWGKVNVEEAGGEALGRLLVVYPWTQRFFDNFGNLSSPSAIMGNPKVKAHGKKVLTSFGEAVKNMDNLKGAFAKLSELHCDKLHVDPENFKLLGNAMVIILATHFGKEFTPDVQAAWQKLVSGVATALAHKYH.

The region spanning 3–147 is the Globin domain; the sequence is HFTAEEKSTI…VATALAHKYH (145 aa). Phosphoserine occurs at positions 14 and 51. Heme b contacts are provided by H64 and H93.

The protein belongs to the globin family. As to quaternary structure, heterotetramer of two alpha chains and two epsilon chains in early embryonic hemoglobin Gower-2; two zeta chains and two epsilon chains in early embryonic hemoglobin Gower-1. As to expression, red blood cells.

In terms of biological role, the epsilon chain is a beta-type chain of early mammalian embryonic hemoglobin. This is Hemoglobin subunit epsilon (HBE1) from Propithecus verreauxi (White sifaka).